A 176-amino-acid chain; its full sequence is NAD(P)H-quinone oxidoreductase subunit 6, chloroplastic (176 aa).

Helical transmembrane passes span 10-30, 32-52, 61-81, 92-112, and 152-172; these read FLLVFLGSGLLVGGLGVVLLP, PIFSAFSLGFVLFCISLLYIL, AQLLIYVGAINVLIIFAVMFM, LWTVGNGITSLVCTTILFSLL, and FFLPFELISIILLVALIGAIS.

The protein belongs to the complex I subunit 6 family. In terms of assembly, NDH is composed of at least 16 different subunits, 5 of which are encoded in the nucleus.

The protein resides in the plastid. It is found in the chloroplast thylakoid membrane. It catalyses the reaction a plastoquinone + NADH + (n+1) H(+)(in) = a plastoquinol + NAD(+) + n H(+)(out). The enzyme catalyses a plastoquinone + NADPH + (n+1) H(+)(in) = a plastoquinol + NADP(+) + n H(+)(out). NDH shuttles electrons from NAD(P)H:plastoquinone, via FMN and iron-sulfur (Fe-S) centers, to quinones in the photosynthetic chain and possibly in a chloroplast respiratory chain. The immediate electron acceptor for the enzyme in this species is believed to be plastoquinone. Couples the redox reaction to proton translocation, and thus conserves the redox energy in a proton gradient. The chain is NAD(P)H-quinone oxidoreductase subunit 6, chloroplastic (ndhG) from Lepidium virginicum (Virginia pepperweed).